The following is a 334-amino-acid chain: Ferredoxin--NADP reductase (334 aa).

Aspartate 33, glutamine 41, tyrosine 46, alanine 86, phenylalanine 120, aspartate 286, and threonine 327 together coordinate FAD.

Belongs to the ferredoxin--NADP reductase type 2 family. In terms of assembly, homodimer. FAD is required as a cofactor.

It carries out the reaction 2 reduced [2Fe-2S]-[ferredoxin] + NADP(+) + H(+) = 2 oxidized [2Fe-2S]-[ferredoxin] + NADPH. In Rickettsia prowazekii (strain Madrid E), this protein is Ferredoxin--NADP reductase.